The sequence spans 1201 residues: DNA-directed RNA polymerase subunit beta' (1201 aa).

4 residues coordinate Zn(2+): cysteine 60, cysteine 62, cysteine 75, and cysteine 78. The Mg(2+) site is built by aspartate 449, aspartate 451, and aspartate 453. Zn(2+) is bound by residues cysteine 818, cysteine 892, cysteine 899, and cysteine 902.

The protein belongs to the RNA polymerase beta' chain family. In terms of assembly, the RNAP catalytic core consists of 2 alpha, 1 beta, 1 beta' and 1 omega subunit. When a sigma factor is associated with the core the holoenzyme is formed, which can initiate transcription. Mg(2+) is required as a cofactor. It depends on Zn(2+) as a cofactor.

It catalyses the reaction RNA(n) + a ribonucleoside 5'-triphosphate = RNA(n+1) + diphosphate. Functionally, DNA-dependent RNA polymerase catalyzes the transcription of DNA into RNA using the four ribonucleoside triphosphates as substrates. In Listeria welshimeri serovar 6b (strain ATCC 35897 / DSM 20650 / CCUG 15529 / CIP 8149 / NCTC 11857 / SLCC 5334 / V8), this protein is DNA-directed RNA polymerase subunit beta'.